The following is a 106-amino-acid chain: ATP-dependent Clp protease adapter protein ClpS (106 aa).

It belongs to the ClpS family. In terms of assembly, binds to the N-terminal domain of the chaperone ClpA.

Involved in the modulation of the specificity of the ClpAP-mediated ATP-dependent protein degradation. The polypeptide is ATP-dependent Clp protease adapter protein ClpS (Pseudoalteromonas atlantica (strain T6c / ATCC BAA-1087)).